A 37-amino-acid chain; its full sequence is Potassium channel toxin alpha-KTx 1.3 (37 aa).

Gln-1 is modified (pyrrolidone carboxylic acid). Intrachain disulfides connect Cys-7-Cys-28, Cys-13-Cys-33, and Cys-17-Cys-35. The interaction with Ca(2+)-activated K(+) channels stretch occupies residues 26–33 (GKCMGKKC).

Belongs to the short scorpion toxin superfamily. Potassium channel inhibitor family. Alpha-KTx 01 subfamily. In terms of tissue distribution, expressed by the venom gland.

Its subcellular location is the secreted. In terms of biological role, blocks selectively the high conductance calcium-activated (maxi-K) potassium channels (KCa1.1/KCNMA1). The sequence is that of Potassium channel toxin alpha-KTx 1.3 from Hottentotta tamulus (Eastern Indian scorpion).